Here is a 33-residue protein sequence, read N- to C-terminus: Rugosin-A (33 aa).

Cys27 and Cys33 are disulfide-bonded.

This sequence belongs to the frog skin active peptide (FSAP) family. Brevinin subfamily. As to expression, expressed by the skin glands.

Its subcellular location is the secreted. Has antibacterial activity against Gram-positive bacteria. In Glandirana rugosa (Japanese wrinkled frog), this protein is Rugosin-A.